We begin with the raw amino-acid sequence, 424 residues long: Elongation factor 1-alpha (424 aa).

The 219-residue stretch at 5–223 (KPHLNLITIG…DAFKVPEKPI (219 aa)) folds into the tr-type G domain. The G1 stretch occupies residues 14-21 (GHVDHGKS). Residue 14–21 (GHVDHGKS) participates in GTP binding. Serine 21 contacts Mg(2+). Positions 70–74 (GVTID) are G2. Positions 91 to 94 (DAPG) are G3. GTP-binding positions include 91–95 (DAPGH) and 148–151 (NKMD). Positions 148 to 151 (NKMD) are G4. Positions 187–189 (SGY) are G5.

This sequence belongs to the TRAFAC class translation factor GTPase superfamily. Classic translation factor GTPase family. EF-Tu/EF-1A subfamily.

The protein resides in the cytoplasm. The enzyme catalyses GTP + H2O = GDP + phosphate + H(+). GTP hydrolase that promotes the GTP-dependent binding of aminoacyl-tRNA to the A-site of ribosomes during protein biosynthesis. The protein is Elongation factor 1-alpha of Thermoplasma volcanium (strain ATCC 51530 / DSM 4299 / JCM 9571 / NBRC 15438 / GSS1).